A 60-amino-acid chain; its full sequence is Protein translocase subunit SecE (60 aa).

A helical transmembrane segment spans residues Leu37–Leu57.

This sequence belongs to the SecE/SEC61-gamma family. In terms of assembly, component of the Sec protein translocase complex. Heterotrimer consisting of SecY (alpha), SecG (beta) and SecE (gamma) subunits. The heterotrimers can form oligomers, although 1 heterotrimer is thought to be able to translocate proteins. Interacts with the ribosome. May interact with SecDF, and other proteins may be involved.

The protein resides in the cell membrane. In terms of biological role, essential subunit of the Sec protein translocation channel SecYEG. Clamps together the 2 halves of SecY. May contact the channel plug during translocation. The protein is Protein translocase subunit SecE of Aeropyrum pernix (strain ATCC 700893 / DSM 11879 / JCM 9820 / NBRC 100138 / K1).